The following is a 702-amino-acid chain: Threonine--tRNA ligase (702 aa).

The segment at 1–30 is disordered; that stretch reads MSAPVHPVPGADGGDPLRPATPGLRSPQVP. In terms of domain architecture, TGS spans 15–84; that stretch reads DPLRPATPGL…DVDVEVTPVP (70 aa). The catalytic stretch occupies residues 279–585; the sequence is DHRKLGIELD…LTEHYAGAFP (307 aa). Zn(2+)-binding residues include Cys-384, His-435, and His-562.

The protein belongs to the class-II aminoacyl-tRNA synthetase family. In terms of assembly, homodimer. It depends on Zn(2+) as a cofactor.

It is found in the cytoplasm. The catalysed reaction is tRNA(Thr) + L-threonine + ATP = L-threonyl-tRNA(Thr) + AMP + diphosphate + H(+). In terms of biological role, catalyzes the attachment of threonine to tRNA(Thr) in a two-step reaction: L-threonine is first activated by ATP to form Thr-AMP and then transferred to the acceptor end of tRNA(Thr). Also edits incorrectly charged L-seryl-tRNA(Thr). In Mycobacterium leprae (strain Br4923), this protein is Threonine--tRNA ligase.